The primary structure comprises 105 residues: uncharacterized protein (105 aa).

This is an uncharacterized protein from Escherichia coli (strain K12).